The sequence spans 296 residues: Myozenin-1 (296 aa).

Ser82 is subject to Phosphoserine. Gly residues-rich tracts occupy residues 105–117 (FSYG…GQAG) and 134–170 (SGFG…QAGG). Residues 105 to 172 (FSYGKGSSGG…GSGDQAGGDG (68 aa)) are disordered.

Belongs to the myozenin family. Interacts with ACTN2, ACTN3, FLNA, FLNB, FLNC, LDB3, PPP3CA and TCAP. Interacts via its C-terminal region with MYOT. Expressed primarily in skeletal muscle and specifically enriched in the gastrocnemius, which is composed predominantly of fast-twitch muscle fibers. Detected at lower levels in heart.

It is found in the nucleus. The protein resides in the cell projection. Its subcellular location is the pseudopodium. Its function is as follows. Myozenins may serve as intracellular binding proteins involved in linking Z-disk proteins such as alpha-actinin, gamma-filamin, TCAP/telethonin, LDB3/ZASP and localizing calcineurin signaling to the sarcomere. Plays an important role in the modulation of calcineurin signaling. May play a role in myofibrillogenesis. In Mus musculus (Mouse), this protein is Myozenin-1.